A 216-amino-acid polypeptide reads, in one-letter code: MOB kinase activator 3C (216 aa).

Residues cysteine 82, cysteine 87, histidine 164, and histidine 169 each coordinate Zn(2+).

The protein belongs to the MOB1/phocein family.

May regulate the activity of kinases. This is MOB kinase activator 3C (MOB3C) from Bos taurus (Bovine).